A 727-amino-acid polypeptide reads, in one-letter code: ABC transporter G family member 6 (727 aa).

Residues 68 to 333 (LSFTDLTYSV…FAEFGHPIPE (266 aa)) form the ABC transporter domain. 126 to 133 (GASGSGKS) serves as a coordination point for ATP. The 211-residue stretch at 421–631 (VELAVLAKRS…PYEAVLLNEF (211 aa)) folds into the ABC transmembrane type-2 domain. 6 consecutive transmembrane segments (helical) span residues 440–460 (LFGI…TMFW), 475–495 (CFAF…PVFL), 517–537 (LSHS…FAAI), 560–580 (ASFW…PHVM), 581–601 (LGYT…GFFI), and 700–720 (LWVT…SLLL).

The protein belongs to the ABC transporter superfamily. ABCG family. Eye pigment precursor importer (TC 3.A.1.204) subfamily.

Its subcellular location is the membrane. The sequence is that of ABC transporter G family member 6 (ABCG6) from Arabidopsis thaliana (Mouse-ear cress).